The chain runs to 404 residues: 6-deoxyerythronolide B hydroxylase (404 aa).

Position 351 (Cys-351) interacts with heme.

Belongs to the cytochrome P450 family. Requires heme as cofactor.

The protein resides in the cytoplasm. It catalyses the reaction 6-deoxyerythronolide B + 2 reduced [2Fe-2S]-[ferredoxin] + O2 + 2 H(+) = erythronolide B + 2 oxidized [2Fe-2S]-[ferredoxin] + H2O. The protein operates within antibiotic biosynthesis; erythromycin biosynthesis. Catalyzes the conversion of 6-deoxyerythronolide B (6-DEB) to erythronolide B (EB) by the insertion of an oxygen at the 6S position of 6-DEB. Requires the participation of a ferredoxin and a ferredoxin reductase for the transfer of electrons from NADPH to the monooxygenase. In Saccharopolyspora erythraea (strain ATCC 11635 / DSM 40517 / JCM 4748 / NBRC 13426 / NCIMB 8594 / NRRL 2338), this protein is 6-deoxyerythronolide B hydroxylase.